The chain runs to 260 residues: Dehydrogenase/reductase SDR family member 11 (260 aa).

The first 30 residues, 1–30, serve as a signal peptide directing secretion; the sequence is MARPGMERWRDRLALVTGASGGIGAAVARA. Residues 18-23, 43-44, Glu-49, 70-71, and Asn-97 contribute to the NADP(+) site; these read GASGGI, RT, and DL. The substrate site is built by Ser-151 and Tyr-166. NADP(+)-binding positions include Tyr-166, Lys-170, 201–204, and Lys-208; that span reads VETQ. Tyr-166 functions as the Proton acceptor in the catalytic mechanism.

It belongs to the short-chain dehydrogenases/reductases (SDR) family. Homotetramer. In terms of tissue distribution, isoform 1: Ubiquitously expressed, with highest levels in testis, small intestine, colon, kidney, brain and heart. Isoform 3: Expressed in brain, heart and skeletal muscle.

It is found in the secreted. The catalysed reaction is a 3beta-hydroxysteroid + NADP(+) = a 3-oxosteroid + NADPH + H(+). The enzyme catalyses 17beta-estradiol + NAD(+) = estrone + NADH + H(+). It carries out the reaction 17beta-estradiol + NADP(+) = estrone + NADPH + H(+). The protein operates within steroid biosynthesis; estrogen biosynthesis. Its activity is regulated as follows. Inhibited by flavonoids including apigenin, luteolin, genistein, kaempferol and quercetin and also by carbenoxolone, zearalenone, glycyrrhetinic, curcumin and flufenamic acid. Functionally, catalyzes the conversion of the 17-keto group of estrone, 4- and 5-androstenes and 5-alpha-androstanes into their 17-beta-hydroxyl metabolites and the conversion of the 3-keto group of 3-, 3,17- and 3,20- diketosteroids into their 3-hydroxyl metabolites. Exhibits reductive 3-beta-hydroxysteroid dehydrogenase activity toward 5-beta-androstanes, 5-beta-pregnanes, 4-pregnenes and bile acids. May also reduce endogenous and exogenous alpha-dicarbonyl compounds and xenobiotic alicyclic ketones. The polypeptide is Dehydrogenase/reductase SDR family member 11 (DHRS11) (Homo sapiens (Human)).